We begin with the raw amino-acid sequence, 239 residues long: ATP synthase subunit b (239 aa).

Residues 1 to 22 (MYAQEAQQKPEAQQSAPAAEQP) are compositionally biased toward low complexity. The disordered stretch occupies residues 1–64 (MYAQEAQQKP…GEEEAGEHME (64 aa)). 2 stretches are compositionally biased toward basic and acidic residues: residues 23–33 (KPAEEQAKPEQ) and 45–64 (ELSEASHAAEGEEEAGEHME). Residues 85–105 (SYWIAMAFNFAIVFALLGWAM) traverse the membrane as a helical segment.

The protein belongs to the ATPase B chain family. In terms of assembly, F-type ATPases have 2 components, F(1) - the catalytic core - and F(0) - the membrane proton channel. F(1) has five subunits: alpha(3), beta(3), gamma(1), delta(1), epsilon(1). F(0) has three main subunits: a(1), b(2) and c(10-14). The alpha and beta chains form an alternating ring which encloses part of the gamma chain. F(1) is attached to F(0) by a central stalk formed by the gamma and epsilon chains, while a peripheral stalk is formed by the delta and b chains.

The protein resides in the cell inner membrane. Functionally, f(1)F(0) ATP synthase produces ATP from ADP in the presence of a proton or sodium gradient. F-type ATPases consist of two structural domains, F(1) containing the extramembraneous catalytic core and F(0) containing the membrane proton channel, linked together by a central stalk and a peripheral stalk. During catalysis, ATP synthesis in the catalytic domain of F(1) is coupled via a rotary mechanism of the central stalk subunits to proton translocation. Its function is as follows. Component of the F(0) channel, it forms part of the peripheral stalk, linking F(1) to F(0). This chain is ATP synthase subunit b, found in Koribacter versatilis (strain Ellin345).